A 201-amino-acid polypeptide reads, in one-letter code: Large ribosomal subunit protein uL18 (201 aa).

The protein belongs to the universal ribosomal protein uL18 family. As to quaternary structure, part of the 50S ribosomal subunit. Contacts the 5S and 23S rRNAs.

This is one of the proteins that bind and probably mediate the attachment of the 5S RNA into the large ribosomal subunit, where it forms part of the central protuberance. The chain is Large ribosomal subunit protein uL18 from Thermococcus kodakarensis (strain ATCC BAA-918 / JCM 12380 / KOD1) (Pyrococcus kodakaraensis (strain KOD1)).